The primary structure comprises 406 residues: Serine hydroxymethyltransferase (406 aa).

(6S)-5,6,7,8-tetrahydrofolate contacts are provided by residues L111 and 115-117 (GHL). The residue at position 220 (K220) is an N6-(pyridoxal phosphate)lysine. Residue 340–342 (SAF) participates in (6S)-5,6,7,8-tetrahydrofolate binding.

This sequence belongs to the SHMT family. Homodimer. Requires pyridoxal 5'-phosphate as cofactor.

It is found in the cytoplasm. It carries out the reaction (6R)-5,10-methylene-5,6,7,8-tetrahydrofolate + glycine + H2O = (6S)-5,6,7,8-tetrahydrofolate + L-serine. It participates in one-carbon metabolism; tetrahydrofolate interconversion. The protein operates within amino-acid biosynthesis; glycine biosynthesis; glycine from L-serine: step 1/1. Functionally, catalyzes the reversible interconversion of serine and glycine with tetrahydrofolate (THF) serving as the one-carbon carrier. This reaction serves as the major source of one-carbon groups required for the biosynthesis of purines, thymidylate, methionine, and other important biomolecules. Also exhibits THF-independent aldolase activity toward beta-hydroxyamino acids, producing glycine and aldehydes, via a retro-aldol mechanism. The sequence is that of Serine hydroxymethyltransferase from Mycoplasma genitalium (strain ATCC 33530 / DSM 19775 / NCTC 10195 / G37) (Mycoplasmoides genitalium).